Here is a 478-residue protein sequence, read N- to C-terminus: Chromosomal replication initiator protein DnaA (478 aa).

Positions 1–71 are domain I, interacts with DnaA modulators; it reads MNLTHIWKTT…RNALTRVVGY (71 aa). Positions 71-136 are domain II; it reads YPVQVQVLIA…LDLASAMRSG (66 aa). A domain III, AAA+ region region spans residues 137–353; the sequence is MLNPRYTFAS…GSLNRVAAYA (217 aa). Positions 181, 183, 184, and 185 each coordinate ATP. Residues 354–478 are domain IV, binds dsDNA; the sequence is ELNRLPITID…RERIQMMRGL (125 aa).

The protein belongs to the DnaA family. As to quaternary structure, oligomerizes as a right-handed, spiral filament on DNA at oriC.

The protein localises to the cytoplasm. Its function is as follows. Plays an essential role in the initiation and regulation of chromosomal replication. ATP-DnaA binds to the origin of replication (oriC) to initiate formation of the DNA replication initiation complex once per cell cycle. Binds the DnaA box (a 9 base pair repeat at the origin) and separates the double-stranded (ds)DNA. Forms a right-handed helical filament on oriC DNA; dsDNA binds to the exterior of the filament while single-stranded (ss)DNA is stabiized in the filament's interior. The ATP-DnaA-oriC complex binds and stabilizes one strand of the AT-rich DNA unwinding element (DUE), permitting loading of DNA polymerase. After initiation quickly degrades to an ADP-DnaA complex that is not apt for DNA replication. Binds acidic phospholipids. This Chloroflexus aggregans (strain MD-66 / DSM 9485) protein is Chromosomal replication initiator protein DnaA.